Consider the following 153-residue polypeptide: Transcriptional repressor NrdR (153 aa).

Residues 3 to 34 fold into a zinc finger; it reads CPFCGKENTRVIDSRPADDCSSIRRRRQCDEC. The ATP-cone domain maps to 49–139; sequence LVVIKKDNNR…VYREFKDVNT (91 aa).

This sequence belongs to the NrdR family. It depends on Zn(2+) as a cofactor.

Negatively regulates transcription of bacterial ribonucleotide reductase nrd genes and operons by binding to NrdR-boxes. The protein is Transcriptional repressor NrdR of Lachnoclostridium phytofermentans (strain ATCC 700394 / DSM 18823 / ISDg) (Clostridium phytofermentans).